A 699-amino-acid polypeptide reads, in one-letter code: Endogenous retrovirus group K member 19 Env polyprotein (699 aa).

Residues 1 to 47 are disordered; it reads MNPSEMQRKAPPRRRRHRNRAPLTHKMNKMVTSEEQMKLPSTKKAEP. Residues 1–89 form the signal peptide; that stretch reads MNPSEMQRKA…ALMIVSMVVS (89 aa). A compositionally biased stretch (basic residues) spans 10–20; that stretch reads APPRRRRHRNR. Topologically, residues 90–632 are extracellular; it reads LPMPAGAAAA…NLNPVTWVKT (543 aa). N-linked (GlcNAc...) asparagine glycans are attached at residues N100, N128, N153, N274, N355, N372, and N461. A fusion peptide region spans residues 466–486; the sequence is FIFTLIAVIMGLIAVTATAAV. N507, N554, N566, and N585 each carry an N-linked (GlcNAc...) asparagine glycan. Residues 633-653 form a helical membrane-spanning segment; sequence IGSTTIINLILILVCLFCLLL. Topologically, residues 654-699 are cytoplasmic; the sequence is VCRCTQQLRRDSDHRERAMMTMAVLSKRKGGNVGKSKRDQIVTVSV.

Belongs to the beta type-B retroviral envelope protein family. HERV class-II K(HML-2) env subfamily. As to quaternary structure, the surface (SU) and transmembrane (TM) proteins form a heterodimer. SU and TM are attached by noncovalent interactions or by a labile interchain disulfide bond. Specific enzymatic cleavages in vivo yield the mature SU and TM proteins.

The protein resides in the cell membrane. It localises to the virion. Retroviral envelope proteins mediate receptor recognition and membrane fusion during early infection. Endogenous envelope proteins may have kept, lost or modified their original function during evolution. This endogenous envelope protein has lost its original fusogenic properties. Its function is as follows. SU mediates receptor recognition. Functionally, TM anchors the envelope heterodimer to the viral membrane through one transmembrane domain. The other hydrophobic domain, called fusion peptide, mediates fusion of the viral membrane with the target cell membrane. The chain is Endogenous retrovirus group K member 19 Env polyprotein (ERVK-19) from Homo sapiens (Human).